A 234-amino-acid chain; its full sequence is Large ribosomal subunit protein eL6 (234 aa).

Belongs to the eukaryotic ribosomal protein eL6 family.

This is Large ribosomal subunit protein eL6 (RPL6) from Mesembryanthemum crystallinum (Common ice plant).